We begin with the raw amino-acid sequence, 274 residues long: Protein RecA (274 aa).

43 to 50 (GPESSGKT) is a binding site for ATP.

Belongs to the RecA family.

Its subcellular location is the cytoplasm. Its function is as follows. Can catalyze the hydrolysis of ATP in the presence of single-stranded DNA, the ATP-dependent uptake of single-stranded DNA by duplex DNA, and the ATP-dependent hybridization of homologous single-stranded DNAs. It interacts with LexA causing its activation and leading to its autocatalytic cleavage. This chain is Protein RecA, found in Neisseria polysaccharea.